A 203-amino-acid chain; its full sequence is Urease accessory protein UreG (203 aa).

11-18 provides a ligand contact to GTP; sequence GPVGSGKT.

It belongs to the SIMIBI class G3E GTPase family. UreG subfamily. Homodimer. UreD, UreF and UreG form a complex that acts as a GTP-hydrolysis-dependent molecular chaperone, activating the urease apoprotein by helping to assemble the nickel containing metallocenter of UreC. The UreE protein probably delivers the nickel.

The protein resides in the cytoplasm. Its function is as follows. Facilitates the functional incorporation of the urease nickel metallocenter. This process requires GTP hydrolysis, probably effectuated by UreG. The polypeptide is Urease accessory protein UreG (Prochlorococcus marinus (strain AS9601)).